Consider the following 209-residue polypeptide: Large ribosomal subunit protein uL4 (209 aa).

The interval 46–71 (GTSSTKTRSEVRGSSKKPWKQKGTGR) is disordered. Positions 59-71 (SSKKPWKQKGTGR) are enriched in basic residues.

The protein belongs to the universal ribosomal protein uL4 family. In terms of assembly, part of the 50S ribosomal subunit.

Its function is as follows. One of the primary rRNA binding proteins, this protein initially binds near the 5'-end of the 23S rRNA. It is important during the early stages of 50S assembly. It makes multiple contacts with different domains of the 23S rRNA in the assembled 50S subunit and ribosome. In terms of biological role, forms part of the polypeptide exit tunnel. This chain is Large ribosomal subunit protein uL4, found in Borreliella afzelii (strain PKo) (Borrelia afzelii).